Here is a 450-residue protein sequence, read N- to C-terminus: Acyltransferase GLAUCE (450 aa).

Active-site proton acceptor residues include His171 and Glu394.

This sequence belongs to the plant acyltransferase family. As to expression, restricted to the central cells of embryo sacs.

Its subcellular location is the cytoplasm. The protein resides in the nucleus. Its function is as follows. Required for double fertilization of the egg cell and the central cell by two sperm cells, resulting in the formation of the embryo and the endosperm. Involved in the regulation of embryonic expression of PHE1. Essential in maternal tissues to ensure the paternal embryonic expression of several genes, including RPS5a and FAC1, both of which being essential for early embryo and endosperm development in fertilized seeds. This chain is Acyltransferase GLAUCE, found in Arabidopsis thaliana (Mouse-ear cress).